The sequence spans 418 residues: Creatine kinase U-type, mitochondrial (418 aa).

Residues 1 to 39 (MAGPFSRLLSARPGLKLLALAGAGSLAAGILLRPESVRA) constitute a mitochondrion transit peptide. The interval 40–64 (ATGERRRLYPPSAEYPDLRKHNNCM) is cardiolipin-binding. Positions 46 to 132 (RLYPPSAEYP…FDPVIQERHN (87 aa)) constitute a Phosphagen kinase N-terminal domain. S152 is modified (phosphoserine). In terms of domain architecture, Phosphagen kinase C-terminal spans 159-401 (YVLSSRVRTG…NYLIDCERRL (243 aa)). Position 162-166 (162-166 (SSRVR)) interacts with ATP. Position 197 is a phosphoserine (S197). T214 carries the post-translational modification Phosphothreonine. H225 serves as a coordination point for ATP. At S233 the chain carries Phosphoserine. Residues R270, R326, 354-359 (RGTGGV), and D369 contribute to the ATP site. The residue at position 356 (T356) is a Phosphothreonine.

The protein belongs to the ATP:guanido phosphotransferase family. In terms of assembly, exists as an octamer composed of four MTCK homodimers. In many tissues, with highest levels in brain gut and kidney. In the kidney localized primarily in the outer medulla in the thick ascending limb and distal convoluted tubule.

It localises to the mitochondrion inner membrane. It carries out the reaction creatine + ATP = N-phosphocreatine + ADP + H(+). In terms of biological role, reversibly catalyzes the transfer of phosphate between ATP and various phosphogens (e.g. creatine phosphate). Creatine kinase isoenzymes play a central role in energy transduction in tissues with large, fluctuating energy demands, such as skeletal muscle, heart, brain and spermatozoa. This is Creatine kinase U-type, mitochondrial (Ckmt1) from Rattus norvegicus (Rat).